The sequence spans 463 residues: Cysteine--tRNA ligase (463 aa).

Zn(2+) is bound at residue Cys27. The 'HIGH' region motif lies at Met29 to His39. Zn(2+) contacts are provided by Cys208, His233, and Glu237. The short motif at Lys265–Ser269 is the 'KMSKS' region element. Residue Lys268 coordinates ATP.

Belongs to the class-I aminoacyl-tRNA synthetase family. In terms of assembly, monomer. The cofactor is Zn(2+).

The protein resides in the cytoplasm. The enzyme catalyses tRNA(Cys) + L-cysteine + ATP = L-cysteinyl-tRNA(Cys) + AMP + diphosphate. This Marinobacter nauticus (strain ATCC 700491 / DSM 11845 / VT8) (Marinobacter aquaeolei) protein is Cysteine--tRNA ligase.